We begin with the raw amino-acid sequence, 325 residues long: Putative metal ion transporter ZIPCO (325 aa).

3 helical membrane-spanning segments follow: residues 5 to 25 (TFLA…PAYI), 46 to 66 (IASG…VIIL), and 74 to 94 (LYYI…TDIL). N106 and N160 each carry an N-linked (GlcNAc...) asparagine glycan. 4 helical membrane passes run 179–199 (FFIV…MGSL), 239–259 (IYAW…IFSF), 264–284 (FVEI…SFNM), and 296–316 (HFIS…MILF).

The protein localises to the cytoplasmic vesicle membrane. Its function is as follows. Putative transporter for the divalent zinc and iron cations. The protein is Putative metal ion transporter ZIPCO of Plasmodium falciparum (isolate 3D7).